The primary structure comprises 383 residues: ATP phosphoribosyltransferase regulatory subunit (383 aa).

This sequence belongs to the class-II aminoacyl-tRNA synthetase family. HisZ subfamily. Heteromultimer composed of HisG and HisZ subunits.

The protein resides in the cytoplasm. Its pathway is amino-acid biosynthesis; L-histidine biosynthesis; L-histidine from 5-phospho-alpha-D-ribose 1-diphosphate: step 1/9. Required for the first step of histidine biosynthesis. May allow the feedback regulation of ATP phosphoribosyltransferase activity by histidine. The sequence is that of ATP phosphoribosyltransferase regulatory subunit from Cupriavidus necator (strain ATCC 17699 / DSM 428 / KCTC 22496 / NCIMB 10442 / H16 / Stanier 337) (Ralstonia eutropha).